The sequence spans 122 residues: Large ribosomal subunit protein uL14 (122 aa).

This sequence belongs to the universal ribosomal protein uL14 family. In terms of assembly, part of the 50S ribosomal subunit. Forms a cluster with proteins L3 and L19. In the 70S ribosome, L14 and L19 interact and together make contacts with the 16S rRNA in bridges B5 and B8.

In terms of biological role, binds to 23S rRNA. Forms part of two intersubunit bridges in the 70S ribosome. This chain is Large ribosomal subunit protein uL14, found in Nitratiruptor sp. (strain SB155-2).